We begin with the raw amino-acid sequence, 998 residues long: 2-imino-3-(indol-3-yl)propanoate dimerase (998 aa).

The enzyme catalyses 2 H2O2 = O2 + 2 H2O. The catalysed reaction is 2 2-iminio-3-(indol-3-yl)propanoate + H2O2 = indole-3-pyruvate imine dimer + 2 H2O. It functions in the pathway pigment biosynthesis; violacein biosynthesis. Functionally, catalyzes the hydrogen peroxide-dependent dimerization of two L-tryptophan-derived molecules (imine form of indole 3-pyruvate (IPA)), to form an uncharacterized product suggested to be indole-3-pyruvate imine dimer that can spontaneously convert into dichlorochromopyrrolate (CPA). The uncharacterized product is the substrate of VioE. This is 2-imino-3-(indol-3-yl)propanoate dimerase (vioB) from Chromobacterium violaceum (strain ATCC 12472 / DSM 30191 / JCM 1249 / CCUG 213 / NBRC 12614 / NCIMB 9131 / NCTC 9757 / MK).